The following is a 392-amino-acid chain: Pectate lyase 3 (392 aa).

Residues 1–25 (MGIKHCCYILYFTLALVTLLQPVRS) form the signal peptide. An N-linked (GlcNAc...) asparagine glycan is attached at asparagine 37. Cysteine 54 and cysteine 71 are oxidised to a cystine. Ca(2+)-binding residues include aspartate 194, aspartate 218, and aspartate 222. Arginine 270 is an active-site residue.

It belongs to the polysaccharide lyase 1 family. Amb a subfamily. Monomer. Requires Ca(2+) as cofactor. In terms of processing, the N-terminus is blocked. In terms of tissue distribution, pollen and flowers.

It carries out the reaction Eliminative cleavage of (1-&gt;4)-alpha-D-galacturonan to give oligosaccharides with 4-deoxy-alpha-D-galact-4-enuronosyl groups at their non-reducing ends.. Its pathway is glycan metabolism; pectin degradation; 2-dehydro-3-deoxy-D-gluconate from pectin: step 2/5. Its function is as follows. Has pectate lyase activity. The protein is Pectate lyase 3 of Ambrosia artemisiifolia (Common ragweed).